A 324-amino-acid polypeptide reads, in one-letter code: Formimidoylglutamase (324 aa).

Histidine 124, aspartate 153, histidine 155, aspartate 157, aspartate 245, and aspartate 247 together coordinate Mn(2+).

Belongs to the arginase family. It depends on Mn(2+) as a cofactor.

It carries out the reaction N-formimidoyl-L-glutamate + H2O = formamide + L-glutamate. It participates in amino-acid degradation; L-histidine degradation into L-glutamate; L-glutamate from N-formimidoyl-L-glutamate (hydrolase route): step 1/1. Its function is as follows. Catalyzes the conversion of N-formimidoyl-L-glutamate to L-glutamate and formamide. The sequence is that of Formimidoylglutamase from Hahella chejuensis (strain KCTC 2396).